A 449-amino-acid chain; its full sequence is Glutamyl-tRNA reductase (449 aa).

Substrate contacts are provided by residues 58–61 (TCNR), Ser-121, 126–128 (ETQ), and Gln-132. Cys-59 (nucleophile) is an active-site residue. 203–208 (GLGEMA) provides a ligand contact to NADP(+).

Belongs to the glutamyl-tRNA reductase family. Homodimer.

It carries out the reaction (S)-4-amino-5-oxopentanoate + tRNA(Glu) + NADP(+) = L-glutamyl-tRNA(Glu) + NADPH + H(+). The protein operates within porphyrin-containing compound metabolism; protoporphyrin-IX biosynthesis; 5-aminolevulinate from L-glutamyl-tRNA(Glu): step 1/2. In terms of biological role, catalyzes the NADPH-dependent reduction of glutamyl-tRNA(Glu) to glutamate 1-semialdehyde (GSA). In Helicobacter pylori (strain HPAG1), this protein is Glutamyl-tRNA reductase.